Consider the following 187-residue polypeptide: Adenylate kinase (187 aa).

Residue 10-15 (GSGKGT) coordinates ATP. The segment at 30 to 59 (STGDMLRAEIAAGTELGKQAKTVMDAGNLV) is NMP. AMP-binding positions include Thr31, Arg36, 57 to 59 (NLV), 85 to 88 (GYPR), and Gln92. Residues 126 to 136 (GRAKEQGRADD) are LID. An ATP-binding site is contributed by Arg127. The AMP site is built by Arg133 and Arg144. Gly172 is an ATP binding site.

The protein belongs to the adenylate kinase family. As to quaternary structure, monomer.

The protein localises to the cytoplasm. It catalyses the reaction AMP + ATP = 2 ADP. It functions in the pathway purine metabolism; AMP biosynthesis via salvage pathway; AMP from ADP: step 1/1. Functionally, catalyzes the reversible transfer of the terminal phosphate group between ATP and AMP. Plays an important role in cellular energy homeostasis and in adenine nucleotide metabolism. This is Adenylate kinase from Stenotrophomonas maltophilia (strain K279a).